A 140-amino-acid polypeptide reads, in one-letter code: Blasticidin-S deaminase (140 aa).

The CMP/dCMP-type deaminase domain maps to 8–140 (QQDLELVEVA…ELIPLKYTRN (133 aa)). Cysteine 59 is a binding site for Zn(2+). The active-site Proton donor is glutamate 61. Residues cysteine 100 and cysteine 103 each contribute to the Zn(2+) site.

It belongs to the cytidine and deoxycytidylate deaminase family. Zn(2+) is required as a cofactor.

It catalyses the reaction blasticidin S + H2O + H(+) = deaminohydroxyblasticidin S + NH4(+). In terms of biological role, catalyzes the deamination of the cytosine moiety of the antibiotics blasticidin S, cytomycin and acetylblasticidin S. This Bacillus cereus protein is Blasticidin-S deaminase (bsr).